We begin with the raw amino-acid sequence, 269 residues long: Glutamate racemase (269 aa).

Residues 7–8 (DS) and 39–40 (YG) contribute to the substrate site. Cys70 functions as the Proton donor/acceptor in the catalytic mechanism. Substrate is bound at residue 71 to 72 (NT). The active-site Proton donor/acceptor is the Cys194. Position 195-196 (195-196 (TH)) interacts with substrate.

The protein belongs to the aspartate/glutamate racemases family.

It carries out the reaction L-glutamate = D-glutamate. It participates in cell wall biogenesis; peptidoglycan biosynthesis. In terms of biological role, provides the (R)-glutamate required for cell wall biosynthesis. This Roseobacter denitrificans (strain ATCC 33942 / OCh 114) (Erythrobacter sp. (strain OCh 114)) protein is Glutamate racemase.